A 241-amino-acid polypeptide reads, in one-letter code: Centromere protein H (241 aa).

M1 is subject to N-acetylmethionine. Positions M1–Q24 are disordered. A coiled-coil region spans residues E28–S186. A Glycyl lysine isopeptide (Lys-Gly) (interchain with G-Cter in SUMO2) cross-link involves residue K61. T62 bears the Phosphothreonine mark.

Belongs to the CENP-H/MCM16 family. As to quaternary structure, self-associates. Component of the CENPA-NAC complex, at least composed of CENPA, CENPC, CENPH, CENPM, CENPN, CENPT and CENPU. The CENPA-NAC complex interacts with the CENPA-CAD complex, composed of CENPI, CENPK, CENPL, CENPO, CENPP, CENPQ, CENPR and CENPS. Interacts directly with CENPK. Interacts with KIF2C and NDC80. Interacts with TRIM36. As to expression, abundantly expressed in thymus, spleen, uterus, ovary, testis and muscle, and weakly expressed in small intestine, lung and stomach. Barely detectable expression in kidney, liver, skin and prostate gland. Not detected in brain, heart or adrenal gland. Also expressed weakly in various hematopoietic cell lines.

The protein resides in the nucleus. It localises to the chromosome. The protein localises to the centromere. Its subcellular location is the kinetochore. Its function is as follows. Component of the CENPA-NAC (nucleosome-associated) complex, a complex that plays a central role in assembly of kinetochore proteins, mitotic progression and chromosome segregation. The CENPA-NAC complex recruits the CENPA-CAD (nucleosome distal) complex and may be involved in incorporation of newly synthesized CENPA into centromeres. Required for chromosome congression and efficiently align the chromosomes on a metaphase plate. This is Centromere protein H from Mus musculus (Mouse).